The following is a 478-amino-acid chain: Ribosomal RNA small subunit methyltransferase F (478 aa).

S-adenosyl-L-methionine-binding positions include 123-129 (AAAPGSK), E147, D174, and D192. C245 functions as the Nucleophile in the catalytic mechanism.

Belongs to the class I-like SAM-binding methyltransferase superfamily. RsmB/NOP family.

The protein localises to the cytoplasm. The catalysed reaction is cytidine(1407) in 16S rRNA + S-adenosyl-L-methionine = 5-methylcytidine(1407) in 16S rRNA + S-adenosyl-L-homocysteine + H(+). In terms of biological role, specifically methylates the cytosine at position 1407 (m5C1407) of 16S rRNA. This Vibrio parahaemolyticus serotype O3:K6 (strain RIMD 2210633) protein is Ribosomal RNA small subunit methyltransferase F.